Reading from the N-terminus, the 124-residue chain is Calvin cycle protein CP12-1, chloroplastic (124 aa).

The transit peptide at 1-47 (MTTIAAAGLNVATPRVVVRPVARVLGPVRLNYPWKFGSMKRMVVVKA) directs the protein to the chloroplast. 2 disulfides stabilise this stretch: Cys-68-Cys-77 and Cys-110-Cys-119. Residues 90–124 (AASHARDKKKAGGSDPLEEYCNDNPETDECRTYDN) form a disordered region. Positions 105 to 116 (PLEEYCNDNPET) are enriched in acidic residues.

It belongs to the CP12 family. In terms of assembly, monomer. Component of a complex that contains two dimers of PRK, two tetramers of GAPDH and CP12. CP12 associates with GAPDH, causing its conformation to change. This GAPDH/CP12 complex binds PRK to form a half-complex (one unit). This unit probably dimerizes due partially to interactions between the enzymes of each unit. In terms of processing, contains two disulfide bonds; only the oxidized protein, with two disulfide bonds, is active in complex formation. The C-terminal disulfide is involved in the interaction with GAPDH and the N-terminal disulfide mediates the binding of PRK with this binary complex. In terms of tissue distribution, mostly expressed in flowers, hypocotyl, cotyledons, leaves, stems, and flower stalks. Barely detectable in roots and siliques. Present in root tips and lateral roots. Accumulates in the cotyledons of etiolated seedlings.

It localises to the plastid. Its subcellular location is the chloroplast. Its function is as follows. Acts as a linker essential in the assembly of a core complex of PRK/GAPDH. Coordinates the reversible inactivation of chloroplast enzymes GAPDH and PRK during darkness in photosynthetic tissues. This is Calvin cycle protein CP12-1, chloroplastic (CP12-1) from Arabidopsis thaliana (Mouse-ear cress).